Here is a 314-residue protein sequence, read N- to C-terminus: Taste receptor type 2 member 42 (314 aa).

Residues 1–7 (MATELDK) are Extracellular-facing. The chain crosses the membrane as a helical span at residues 8-28 (IFLILEIAEFIIGMLGNVFIG). At 29 to 50 (LVNCSEGIKNQKVFSADFILTC) the chain is on the cytoplasmic side. A helical membrane pass occupies residues 51 to 71 (LAISTIGQLFVILFDSFLVGL). At 72 to 101 (ASHLYTTYRLGKPVIMLWHMTNHLTTWLAT) the chain is on the extracellular side. Residues 102-122 (CLSIFYFFKIAHFPHSLFLWL) traverse the membrane as a helical segment. Topologically, residues 123–127 (RWRMN) are cytoplasmic. A helical transmembrane segment spans residues 128–148 (GMIVMLLILSLFLLIFDSLVL). The Extracellular portion of the chain corresponds to 149 to 187 (EIFIDISLNIIDKSNLTLYLDESKTLYDKLSILKTLLSL). The N-linked (GlcNAc...) asparagine glycan is linked to Asn163. A helical membrane pass occupies residues 188 to 208 (TSFIPFSLSLTSLLFFFLSLV). Residues 209–238 (RHTRNLKLSSLGSRDSSTEAHRRAMKMVMS) lie on the Cytoplasmic side of the membrane. A helical transmembrane segment spans residues 239 to 259 (FLFLFIVHFFSLQVANWIFFM). Topologically, residues 260-265 (LWNNKY) are extracellular. A helical transmembrane segment spans residues 266–286 (IKFAMLALNAFPSCHSFILIL). Topologically, residues 287-314 (GNSKLRQTAVRLLWHLRNYTKTPNALPL) are cytoplasmic.

Belongs to the G-protein coupled receptor T2R family.

Its subcellular location is the membrane. In terms of biological role, receptor that may play a role in the perception of bitterness and is gustducin-linked. May play a role in sensing the chemical composition of the gastrointestinal content. The activity of this receptor may stimulate alpha gustducin, mediate PLC-beta-2 activation and lead to the gating of TRPM5. The chain is Taste receptor type 2 member 42 (TAS2R42) from Pan paniscus (Pygmy chimpanzee).